The chain runs to 994 residues: Regulator of telomere elongation helicase 1 homolog (994 aa).

In terms of domain architecture, Helicase ATP-binding spans 7 to 316 (AGIPVHFPFE…DDLMLLKEML (310 aa)). 42-49 (SPTGTGKT) contributes to the ATP binding site. [4Fe-4S] cluster is bound by residues C146, C164, C173, and C209. A DEAH box motif is present at residues 252–255 (DEAH). The interval 861-887 (SSGLVKIHKRERSSPPGSSQSSSQTAK) is disordered. Positions 874 to 884 (SPPGSSQSSSQ) are enriched in low complexity.

Belongs to the helicase family. RAD3/XPD subfamily.

The protein resides in the nucleus. It carries out the reaction ATP + H2O = ADP + phosphate + H(+). In terms of biological role, a probable ATP-dependent DNA helicase implicated in DNA repair and the maintenance of genomic stability. Acts as an anti-recombinase to counteract toxic recombination and limit crossover during meiosis. Regulates meiotic recombination and crossover homeostasis by physically dissociating strand invasion events and thereby promotes noncrossover repair by meiotic synthesis dependent strand annealing (SDSA) as well as disassembly of D loop recombination intermediates. This is Regulator of telomere elongation helicase 1 homolog from Drosophila ananassae (Fruit fly).